A 119-amino-acid polypeptide reads, in one-letter code: MVCFSISFNRASFFSAAAPCTSSIPDFALIRPGVAMDSSLDEKNIHRPMIPNAATILMAWLLLTICFIPSFLAQSVQTFLFTNHQPSRLLVFITHVYCLMIKPFVLYFWFLFPLRLPGG.

The next 2 membrane-spanning stretches (helical) occupy residues 53–73 (AATI…SFLA) and 92–112 (FITH…WFLF).

The protein resides in the membrane. This is an uncharacterized protein from Saccharomyces cerevisiae (strain ATCC 204508 / S288c) (Baker's yeast).